Here is a 348-residue protein sequence, read N- to C-terminus: MSAEHDQIRAVAWTGAGVRLLDQRRLPQEEIYWTIACVSDVAQAITKMVVRGAPAIGIAAAYGVVLAARARFSEAGSGWKQLLEADLCDLEAARPTAINLAWALARMQAIIQGLPDHRDPESALLVEARCIHEEDIAANRRMGELGTTLIEGSVGVLTHCNTGSLATGGFGTALGVIRHAYGKGRIEKVFADETRPWLQGARLTTWELLRDGIPVVLIADSVAPYLLGQGEVQWVIVGADRIAANGDTANKIGSYGLAVAARYHNVRFMVVAPTSTIDWNLSDGTRIPIEQRPPEEVLTLGGKAIATVGAEAYNPAFDVIPAHLIDAIVTERGVVRQPTHERMKALFG.

Substrate-binding positions include 51–53, arginine 94, and glutamine 199; that span reads RGA. The active-site Proton donor is aspartate 240. Substrate is bound at residue 250-251; it reads NK.

It belongs to the eIF-2B alpha/beta/delta subunits family. MtnA subfamily.

It carries out the reaction 5-(methylsulfanyl)-alpha-D-ribose 1-phosphate = 5-(methylsulfanyl)-D-ribulose 1-phosphate. The protein operates within amino-acid biosynthesis; L-methionine biosynthesis via salvage pathway; L-methionine from S-methyl-5-thio-alpha-D-ribose 1-phosphate: step 1/6. Functionally, catalyzes the interconversion of methylthioribose-1-phosphate (MTR-1-P) into methylthioribulose-1-phosphate (MTRu-1-P). In Nitrosococcus oceani (strain ATCC 19707 / BCRC 17464 / JCM 30415 / NCIMB 11848 / C-107), this protein is Methylthioribose-1-phosphate isomerase.